Here is a 388-residue protein sequence, read N- to C-terminus: Pepsin F (388 aa).

An N-terminal signal peptide occupies residues 1–15; the sequence is MKWLGLLGLVALSEC. A propeptide spans 16 to 58 (activation peptide); sequence LVTIPLMKVKSMRENLRENDILLDYLEKHPYRPTYKLLSGQQD. The region spanning 74-385 is the Peptidase A1 domain; it reads YIGIISIGTP…DRANNRIGLA (312 aa). Asp-92 is a catalytic residue. Intrachain disulfides connect Cys-105–Cys-110 and Cys-266–Cys-270. Asp-275 is a catalytic residue. Residues Cys-309 and Cys-343 are joined by a disulfide bond.

The protein belongs to the peptidase A1 family.

It is found in the secreted. It catalyses the reaction Preferential cleavage: hydrophobic, preferably aromatic, residues in P1 and P1' positions. Cleaves 1-Phe-|-Val-2, 4-Gln-|-His-5, 13-Glu-|-Ala-14, 14-Ala-|-Leu-15, 15-Leu-|-Tyr-16, 16-Tyr-|-Leu-17, 23-Gly-|-Phe-24, 24-Phe-|-Phe-25 and 25-Phe-|-Tyr-26 bonds in the B chain of insulin.. Its function is as follows. Shows particularly broad specificity; although bonds involving phenylalanine and leucine are preferred, many others are also cleaved to some extent. The sequence is that of Pepsin F from Oryctolagus cuniculus (Rabbit).